Here is a 390-residue protein sequence, read N- to C-terminus: MQLTIKALVGILTTISAATAVSFDMENLGAEKRGVSGEELHMLHGNEVLARFANGVYPEVANGTRVSKRAGGAEVDLTSVGGGTAWAVKAKIGSNEEEVTMLLDSGYEHALVAADSDYSPGKSSSNENTGEKFFAGFLTGGGNEGTIHLDDLSVGGLKASKFAFGYTKNRDFSSNQKLGGILGMSLPGHVDYVPGFKNHGWGGFIQTLKNQGVIDEAMYQMTLKGDGGKLSIGEVDDSQYEGDLETLMNTGKAYGHCGFKGTLNGEKHNFLLDSGTTGIAGSYDSVKKFLQGMSGVELVEEDKRGSVTGKVDCDSMPSFKISVDGKFDVKLSDDVMKKYDLGNGKCLLPIYGYTNMPKSYSYNWIVGGAFMREVSVVCKFDSNEMQIARQ.

An N-terminal signal peptide occupies residues Met1 to Ala20. The propeptide at Val21–Arg69 is removed in mature form. A glycan (N-linked (GlcNAc...) asparagine) is linked at Asn62. Positions Trp86–Ala388 constitute a Peptidase A1 domain. Active-site residues include Asp104 and Asp273. The cysteines at positions 313 and 346 are disulfide-linked.

Belongs to the peptidase A1 family.

It localises to the secreted. In terms of biological role, probable inactive secreted aspartyl protease. May promote an inflammatory immune response in the host when the host skin barrier is breached. Has no detectable protease activity in vitro on fluorogenic substrates, a peptide library, or with the general protease substrate casein. The presence of the enzyme also does not affect the activity of the secreted aspartyl protease SAP1. The chain is Probable inactive secreted aspartyl protease from Malassezia globosa (strain ATCC MYA-4612 / CBS 7966) (Dandruff-associated fungus).